A 254-amino-acid polypeptide reads, in one-letter code: 3-deoxy-manno-octulosonate cytidylyltransferase (254 aa).

Belongs to the KdsB family.

Its subcellular location is the cytoplasm. It carries out the reaction 3-deoxy-alpha-D-manno-oct-2-ulosonate + CTP = CMP-3-deoxy-beta-D-manno-octulosonate + diphosphate. The protein operates within nucleotide-sugar biosynthesis; CMP-3-deoxy-D-manno-octulosonate biosynthesis; CMP-3-deoxy-D-manno-octulosonate from 3-deoxy-D-manno-octulosonate and CTP: step 1/1. Its pathway is bacterial outer membrane biogenesis; lipopolysaccharide biosynthesis. Functionally, activates KDO (a required 8-carbon sugar) for incorporation into bacterial lipopolysaccharide in Gram-negative bacteria. The protein is 3-deoxy-manno-octulosonate cytidylyltransferase of Ectopseudomonas mendocina (strain ymp) (Pseudomonas mendocina).